The sequence spans 301 residues: Transmembrane protein 178A (301 aa).

An N-terminal signal peptide occupies residues 1 to 25 (MEKRALVTAISLSMSLLALMLLVTA). At 26-183 (IFTDHWYETD…LLHLRRITAG (158 aa)) the chain is on the extracellular side. The N-linked (GlcNAc...) asparagine glycan is linked to Asn-162. The chain crosses the membrane as a helical span at residues 184–204 (FLGMAAAVMLCGSIVAAVGFF). The Cytoplasmic segment spans residues 205–215 (WEESLTQHVSG). A helical transmembrane segment spans residues 216–236 (LLFLMAGIFCTISLCTYAASV). At 237–258 (SYDLSRNPPFIYGLPSDVDHGY) the chain is on the extracellular side. Residues 259–279 (GWSIFCAWVSLGLTVASGCIC) traverse the membrane as a helical segment. The Cytoplasmic portion of the chain corresponds to 280–301 (TTYPFLSRTKALRSKTARESSV).

This sequence belongs to the TMEM178 family.

It localises to the endoplasmic reticulum membrane. Its function is as follows. May act as a negative regulator of osteoclast differentiation. The chain is Transmembrane protein 178A (tmem178a) from Danio rerio (Zebrafish).